The chain runs to 244 residues: uncharacterized protein (244 aa).

The 68-residue stretch at 7-74 (VKEKDQVVAH…YHRGAFIERF (68 aa)) folds into the HTH gntR-type domain. Residues 34–53 (RNEIAHGLGVSRVPIQEALV) constitute a DNA-binding region (H-T-H motif).

This is an uncharacterized protein from Mycobacterium tuberculosis (strain CDC 1551 / Oshkosh).